The chain runs to 131 residues: MVRKRALGLAGSALTLVLGAVGFTAPAQAAPSCPAGSLCTYSGTGLSGARTVIPASDMEKAGTDGVKLPASARSFANGTHFTLRYGPARKVTCVRFPCYQYATVGKVAPGAQLRSLPSPGATVTVGQDLGD.

The N-terminal stretch at 1 to 29 (MVRKRALGLAGSALTLVLGAVGFTAPAQA) is a signal peptide. Cystine bridges form between Cys-33–Cys-39 and Cys-93–Cys-98.

Functionally, inhibits microbial metallo-proteinases, such as thermolysin, but not serine, thiol, or carboxyl proteinases. The protein is Metalloproteinase inhibitor (smpI) of Streptomyces nigrescens.